The sequence spans 103 residues: Small ribosomal subunit protein uS10 (103 aa).

The protein belongs to the universal ribosomal protein uS10 family. As to quaternary structure, part of the 30S ribosomal subunit.

Functionally, involved in the binding of tRNA to the ribosomes. This Psychrobacter arcticus (strain DSM 17307 / VKM B-2377 / 273-4) protein is Small ribosomal subunit protein uS10.